The following is a 215-amino-acid chain: Oligoribonuclease (215 aa).

In terms of domain architecture, Exonuclease spans 5–170 (LVWIDCEMTG…ADIHESIREL (166 aa)). Tyrosine 127 is an active-site residue. The disordered stretch occupies residues 196–215 (LDEGKDAPGPSDSASAPPTG). Positions 202–215 (APGPSDSASAPPTG) are enriched in low complexity.

This sequence belongs to the oligoribonuclease family.

Its subcellular location is the cytoplasm. Its function is as follows. 3'-to-5' exoribonuclease specific for small oligoribonucleotides. The chain is Oligoribonuclease from Mycolicibacterium paratuberculosis (strain ATCC BAA-968 / K-10) (Mycobacterium paratuberculosis).